The primary structure comprises 379 residues: Cytochrome b (379 aa).

Helical transmembrane passes span Phe33 to Met53, Trp77 to Ile98, Trp113 to Leu133, and Phe178 to Leu198. Residues His83 and His97 each contribute to the heme b site. His182 and His196 together coordinate heme b. His201 contributes to the a ubiquinone binding site. 4 consecutive transmembrane segments (helical) span residues Thr226–Phe246, Leu288–Gln308, Ile320–Gly340, and Phe347–Pro367.

It belongs to the cytochrome b family. The cytochrome bc1 complex contains 11 subunits: 3 respiratory subunits (MT-CYB, CYC1 and UQCRFS1), 2 core proteins (UQCRC1 and UQCRC2) and 6 low-molecular weight proteins (UQCRH/QCR6, UQCRB/QCR7, UQCRQ/QCR8, UQCR10/QCR9, UQCR11/QCR10 and a cleavage product of UQCRFS1). This cytochrome bc1 complex then forms a dimer. The cofactor is heme b.

The protein localises to the mitochondrion inner membrane. Its function is as follows. Component of the ubiquinol-cytochrome c reductase complex (complex III or cytochrome b-c1 complex) that is part of the mitochondrial respiratory chain. The b-c1 complex mediates electron transfer from ubiquinol to cytochrome c. Contributes to the generation of a proton gradient across the mitochondrial membrane that is then used for ATP synthesis. The chain is Cytochrome b (MT-CYB) from Dipodomys nelsoni (Nelson's kangaroo rat).